We begin with the raw amino-acid sequence, 536 residues long: Apolipoprotein N-acyltransferase (536 aa).

6 consecutive transmembrane segments (helical) span residues proline 34–alanine 54, alanine 64–isoleucine 84, tyrosine 89–alanine 109, glycine 129–tryptophan 149, tyrosine 172–tryptophan 192, and histidine 199–glutamine 219. The 244-residue stretch at leucine 244 to glycine 487 folds into the CN hydrolase domain. The Proton acceptor role is filled by glutamate 283. Lysine 345 is a catalytic residue. Cysteine 395 functions as the Nucleophile in the catalytic mechanism. A helical membrane pass occupies residues tryptophan 503 to tryptophan 523.

This sequence belongs to the CN hydrolase family. Apolipoprotein N-acyltransferase subfamily.

The protein localises to the cell inner membrane. It catalyses the reaction N-terminal S-1,2-diacyl-sn-glyceryl-L-cysteinyl-[lipoprotein] + a glycerophospholipid = N-acyl-S-1,2-diacyl-sn-glyceryl-L-cysteinyl-[lipoprotein] + a 2-acyl-sn-glycero-3-phospholipid + H(+). It functions in the pathway protein modification; lipoprotein biosynthesis (N-acyl transfer). Its function is as follows. Catalyzes the phospholipid dependent N-acylation of the N-terminal cysteine of apolipoprotein, the last step in lipoprotein maturation. The polypeptide is Apolipoprotein N-acyltransferase (Verminephrobacter eiseniae (strain EF01-2)).